The chain runs to 192 residues: dTTP/UTP pyrophosphatase (192 aa).

Catalysis depends on Asp71, which acts as the Proton acceptor.

This sequence belongs to the Maf family. YhdE subfamily. It depends on a divalent metal cation as a cofactor.

It localises to the cytoplasm. It catalyses the reaction dTTP + H2O = dTMP + diphosphate + H(+). It carries out the reaction UTP + H2O = UMP + diphosphate + H(+). Nucleoside triphosphate pyrophosphatase that hydrolyzes dTTP and UTP. May have a dual role in cell division arrest and in preventing the incorporation of modified nucleotides into cellular nucleic acids. The polypeptide is dTTP/UTP pyrophosphatase (Clostridium kluyveri (strain NBRC 12016)).